A 202-amino-acid chain; its full sequence is Inner membrane-spanning protein YciB (202 aa).

Transmembrane regions (helical) follow at residues 3 to 23, 46 to 66, 73 to 93, 100 to 120, 145 to 165, and 173 to 193; these read ILFD…AGGN, ILLA…WVWM, TMLW…LFFH, WKPT…AVIF, LAWA…AYNF, and FKLF…GFYL.

This sequence belongs to the YciB family.

Its subcellular location is the cell inner membrane. Plays a role in cell envelope biogenesis, maintenance of cell envelope integrity and membrane homeostasis. The chain is Inner membrane-spanning protein YciB from Aromatoleum aromaticum (strain DSM 19018 / LMG 30748 / EbN1) (Azoarcus sp. (strain EbN1)).